Consider the following 419-residue polypeptide: Creatine kinase S-type, mitochondrial (419 aa).

The N-terminal 39 residues, 1-39, are a transit peptide targeting the mitochondrion; that stretch reads MASAFSKLLTGRNASLLFTTLGTSALTTGYLLNRQKVSA. The cardiolipin-binding stretch occupies residues 40-64; it reads DAREQHKLFPPSADYPDLRKHNNCM. The 87-residue stretch at 46 to 132 folds into the Phosphagen kinase N-terminal domain; it reads KLFPPSADYP…FDPVIKLRHN (87 aa). The Phosphagen kinase C-terminal domain occupies 159–401; sequence YVLSSRVRTG…NYLVDCEKKL (243 aa). Residues 162 to 166 and His225 contribute to the ATP site; that span reads SSRVR. At Tyr255 the chain carries Phosphotyrosine. ATP-binding positions include Arg270, Arg326, 354 to 359, and Asp369; that span reads RGTGGV. Thr356 bears the Phosphothreonine mark.

The protein belongs to the ATP:guanido phosphotransferase family. Exists as an octamer composed of four CKMT2 homodimers. As to expression, sarcomere-specific. Found only in heart and skeletal muscles.

The protein resides in the mitochondrion inner membrane. The catalysed reaction is creatine + ATP = N-phosphocreatine + ADP + H(+). In terms of biological role, reversibly catalyzes the transfer of phosphate between ATP and various phosphogens (e.g. creatine phosphate). Creatine kinase isoenzymes play a central role in energy transduction in tissues with large, fluctuating energy demands, such as skeletal muscle, heart, brain and spermatozoa. In Rattus norvegicus (Rat), this protein is Creatine kinase S-type, mitochondrial (Ckmt2).